The sequence spans 332 residues: tRNA dimethylallyltransferase (332 aa).

An ATP-binding site is contributed by 14 to 21; sequence GPTASGKT. 16 to 21 is a binding site for substrate; sequence TASGKT. Residues 39-42 are interaction with substrate tRNA; the sequence is DSMQ. The segment at 313-332 is disordered; that stretch reads KRSSKHDCKPQHPRSSTREL. Basic and acidic residues predominate over residues 317 to 332; it reads KHDCKPQHPRSSTREL.

Belongs to the IPP transferase family. In terms of assembly, monomer. Mg(2+) serves as cofactor.

It catalyses the reaction adenosine(37) in tRNA + dimethylallyl diphosphate = N(6)-dimethylallyladenosine(37) in tRNA + diphosphate. Functionally, catalyzes the transfer of a dimethylallyl group onto the adenine at position 37 in tRNAs that read codons beginning with uridine, leading to the formation of N6-(dimethylallyl)adenosine (i(6)A). This Staphylococcus haemolyticus (strain JCSC1435) protein is tRNA dimethylallyltransferase.